The following is a 180-amino-acid chain: NAD(P)H-quinone oxidoreductase subunit I, chloroplastic (180 aa).

4Fe-4S ferredoxin-type domains follow at residues 55-84 (GRIH…VDWR) and 95-124 (LNYS…MTEE). [4Fe-4S] cluster contacts are provided by Cys64, Cys67, Cys70, Cys74, Cys104, Cys107, Cys110, and Cys114.

Belongs to the complex I 23 kDa subunit family. In terms of assembly, NDH is composed of at least 16 different subunits, 5 of which are encoded in the nucleus. [4Fe-4S] cluster is required as a cofactor.

Its subcellular location is the plastid. It localises to the chloroplast thylakoid membrane. The enzyme catalyses a plastoquinone + NADH + (n+1) H(+)(in) = a plastoquinol + NAD(+) + n H(+)(out). It catalyses the reaction a plastoquinone + NADPH + (n+1) H(+)(in) = a plastoquinol + NADP(+) + n H(+)(out). In terms of biological role, NDH shuttles electrons from NAD(P)H:plastoquinone, via FMN and iron-sulfur (Fe-S) centers, to quinones in the photosynthetic chain and possibly in a chloroplast respiratory chain. The immediate electron acceptor for the enzyme in this species is believed to be plastoquinone. Couples the redox reaction to proton translocation, and thus conserves the redox energy in a proton gradient. This is NAD(P)H-quinone oxidoreductase subunit I, chloroplastic from Triticum aestivum (Wheat).